The primary structure comprises 211 residues: Flagellar calcium-binding protein (211 aa).

Residues 1-29 (MGACGSKGSTSDKGLASDKDGKKAKDRKE) are disordered. Positions 15 to 29 (LASDKDGKKAKDRKE) are enriched in basic and acidic residues. EF-hand domains lie at 45–80 (EAKQ…VLKL), 81–116 (DEFT…FVEF), 127–162 (YDFF…LEAW), and 164–199 (AKVE…VKLD). Ca(2+) is bound by residues aspartate 58, asparagine 60, threonine 62, lysine 64, and glutamate 69. Ca(2+)-binding residues include aspartate 140, serine 142, asparagine 144, glutamate 151, aspartate 177, asparagine 179, threonine 181, serine 183, and glutamate 188.

The protein belongs to the calflagin family.

The protein resides in the cell projection. It is found in the cilium. It localises to the flagellum. In terms of biological role, may contribute to the rapid motility of the trypanosomes, playing a role either in flagellar structure or in calcium metabolism. Could alternate between a GDP-bound inactive form to a calcium/GTP-bound active form. The chain is Flagellar calcium-binding protein (FCABP) from Trypanosoma cruzi.